A 78-amino-acid chain; its full sequence is Xibalbin-13 1 (78 aa).

Positions M1–A27 are cleaved as a signal peptide. A propeptide spanning residues E28–R31 is cleaved from the precursor. 4 disulfide bridges follow: C34/C49, C41/C54, C48/C65, and C56/C63. S76 bears the Serine amide mark.

It belongs to the xibalbin-13 family. As to expression, expressed by the venom gland.

The protein localises to the secreted. Its function is as follows. Probable neurotoxin. Strongly inhibits voltage-gated potassium channels (Kv1.1/KCNA1, Kv1.2/KCNA2, Kv1.3/KCNA3, and Kv1.6/KCNA6) and mildly inhibits sodium channels (Nav1.2/SCN2A, Nav1.4/SCN4A, Nav1.5/SCN5A, Nav1.6/SCN8A, and BgNav). Induces activation of protein kinase A type II (PKA-II) and MAP kinase Erk1/2 in primary nociceptive and non-nociceptive sensory neurons. Does not show cytotoxic activity. Does not have an impact on Ca2+, cAMP, and NO signaling in the cell types analyzed. Does not interfere with the adhesion of leukocytes to endothelial cells. This chain is Xibalbin-13 1, found in Xibalbanus tulumensis (Blind cave remipede).